A 318-amino-acid polypeptide reads, in one-letter code: Ankyrin repeat and SOCS box protein 7 (318 aa).

ANK repeat units lie at residues 13–42 (QEELQIQAAVAAGDVHTVRKMLEQGYSPNG), 46–75 (NGWTLLHFSAARGKERCVRVFLEHGADPTV), 80–109 (GGFTALHYAAMHGRARIARLMLESEYRSDI), 116–145 (DGWTPLHVAAHYGRDSFVRLLLEFKAEVDP), 149–178 (KGTTPLQLAIIRERSSCVKILLDHNANIDI), 180–208 (NGFLLRYAVIKSNHSYCRMFLQRGADTNL), and 213–242 (DGQTPLHLSALRDDVLCARMLYNYGADTNT). The 54-residue stretch at 265–318 (LDFLQEVTRQPRNLQDLCRIKIRQCIGLQNLKLLDELPIAKVMKDYLKHKFDDI) folds into the SOCS box domain.

It belongs to the ankyrin SOCS box (ASB) family. In terms of assembly, interacts with CUL5. Interacts with RNF7. Interacts with PSRC1.

The protein operates within protein modification; protein ubiquitination. Its function is as follows. Probable substrate-recognition component of a SCF-like ECS (Elongin-Cullin-SOCS-box protein) E3 ubiquitin-protein ligase complex which mediates the ubiquitination and subsequent proteasomal degradation of target proteins. Plays a role in spindle dynamics and genome integrity by targeting the mitotic progression protein PSRC1 for proteasomal degradation in a cell cycle-dependent manner. Also participates in meiosis by mediating the proper attachment between kinetochores and microtubules. This chain is Ankyrin repeat and SOCS box protein 7 (ASB7), found in Homo sapiens (Human).